Reading from the N-terminus, the 340-residue chain is Phenylalanine--tRNA ligase alpha subunit (340 aa).

Glutamate 255 is a Mg(2+) binding site.

Belongs to the class-II aminoacyl-tRNA synthetase family. Phe-tRNA synthetase alpha subunit type 1 subfamily. As to quaternary structure, tetramer of two alpha and two beta subunits. Requires Mg(2+) as cofactor.

The protein localises to the cytoplasm. It catalyses the reaction tRNA(Phe) + L-phenylalanine + ATP = L-phenylalanyl-tRNA(Phe) + AMP + diphosphate + H(+). The protein is Phenylalanine--tRNA ligase alpha subunit of Exiguobacterium sp. (strain ATCC BAA-1283 / AT1b).